The chain runs to 401 residues: Phosrestin-1 (401 aa).

This sequence belongs to the arrestin family.

Functionally, directly interacts with light-activated rhodopsin thereby activating the phosphorylation of metarhodopsin. Inhibits the dephosphorylation of metarhodopsin. This Calliphora vicina (Blue blowfly) protein is Phosrestin-1 (ARR2).